A 214-amino-acid polypeptide reads, in one-letter code: Cdc42 effector protein 2 (214 aa).

Ser-2 bears the N-acetylserine mark. One can recognise a CRIB domain in the interval 30–44 (ISPPLGDFRHTIHIG). Phosphoserine occurs at positions 31, 101, 137, 141, and 145. The disordered stretch occupies residues 118–151 (ALTLPTTQAPPKPPRLHLESPQPSPKSSPQEAGN).

It belongs to the BORG/CEP family. As to quaternary structure, interacts with CDC42 and RHOQ, in a GTP-dependent manner, and with SEPT7.

It is found in the endomembrane system. The protein localises to the cytoplasm. The protein resides in the cytoskeleton. Functionally, probably involved in the organization of the actin cytoskeleton. May act downstream of CDC42 to induce actin filament assembly leading to cell shape changes. Induces pseudopodia formation in fibroblasts in a CDC42-dependent manner. The chain is Cdc42 effector protein 2 (Cdc42ep2) from Rattus norvegicus (Rat).